We begin with the raw amino-acid sequence, 114 residues long: Large ribosomal subunit protein bL19 (114 aa).

It belongs to the bacterial ribosomal protein bL19 family.

Functionally, this protein is located at the 30S-50S ribosomal subunit interface and may play a role in the structure and function of the aminoacyl-tRNA binding site. This chain is Large ribosomal subunit protein bL19, found in Bacillus mycoides (strain KBAB4) (Bacillus weihenstephanensis).